The sequence spans 247 residues: Phosphatidylserine decarboxylase proenzyme (247 aa).

The active-site Schiff-base intermediate with substrate; via pyruvic acid is the serine 206. The residue at position 206 (serine 206) is a Pyruvic acid (Ser); by autocatalysis.

The protein belongs to the phosphatidylserine decarboxylase family. PSD-A subfamily. As to quaternary structure, heterodimer of a large membrane-associated beta subunit and a small pyruvoyl-containing alpha subunit. Pyruvate is required as a cofactor. In terms of processing, is synthesized initially as an inactive proenzyme. Formation of the active enzyme involves a self-maturation process in which the active site pyruvoyl group is generated from an internal serine residue via an autocatalytic post-translational modification. Two non-identical subunits are generated from the proenzyme in this reaction, and the pyruvate is formed at the N-terminus of the alpha chain, which is derived from the carboxyl end of the proenzyme. The post-translation cleavage follows an unusual pathway, termed non-hydrolytic serinolysis, in which the side chain hydroxyl group of the serine supplies its oxygen atom to form the C-terminus of the beta chain, while the remainder of the serine residue undergoes an oxidative deamination to produce ammonia and the pyruvoyl prosthetic group on the alpha chain.

It localises to the cell membrane. It carries out the reaction a 1,2-diacyl-sn-glycero-3-phospho-L-serine + H(+) = a 1,2-diacyl-sn-glycero-3-phosphoethanolamine + CO2. Its pathway is phospholipid metabolism; phosphatidylethanolamine biosynthesis; phosphatidylethanolamine from CDP-diacylglycerol: step 2/2. Functionally, catalyzes the formation of phosphatidylethanolamine (PtdEtn) from phosphatidylserine (PtdSer). This Nitrobacter winogradskyi (strain ATCC 25391 / DSM 10237 / CIP 104748 / NCIMB 11846 / Nb-255) protein is Phosphatidylserine decarboxylase proenzyme.